A 406-amino-acid chain; its full sequence is MSDIYEIGEALIGDGPELAHIDLIVGSKQGPVGTAFATNMASMSVGHTPLLSVIRPNLPTKPATLIVPKVTVQNLDDASKIFGPAQTAVGRAVADAVEEEIIPKDIVEDIVLMVNVFIDPSAKDYRKIYQYNYGATKLAIKRAFDKYPSVDKVLAEKDRGTHPIMGFKAMKLWNPPYLQVALDLDNEDRMRSIIRDLPKRERILIEAGTPLVKKFGVEIISKIREERPGAFIIADLKTLDVGRVEVKMAADETADAVAISGLGTNESIEKAIHECSKQGIYSILDMMNVSDIPSKLEELKLKPNIVLLHRNIDSETMRDNDGEQQSEWGNIKDIKSKLGKRGLIAVAGGVTPEKVDTALANGANIIIAGRYIIGSSDVRRAAEDFLRYLPQDSDTMRLALDEDEKI.

A formaldehyde-activating enzyme region spans residues M1–I164. H20 serves as the catalytic Proton donor. Substrate contacts are provided by D22, L51, K69, T71, and Q86. A 3-hexulose-6-phosphate synthase region spans residues M165–I406.

It in the N-terminal section; belongs to the formaldehyde-activating enzyme family. This sequence in the C-terminal section; belongs to the HPS/KGPDC family. HPS subfamily.

The enzyme catalyses 5,6,7,8-tetrahydromethanopterin + formaldehyde = 5,10-methylenetetrahydromethanopterin + H2O. The catalysed reaction is D-ribulose 5-phosphate + formaldehyde = D-arabino-hex-3-ulose 6-phosphate. Its pathway is carbohydrate biosynthesis; D-ribose 5-phosphate biosynthesis. Catalyzes the condensation of formaldehyde with tetrahydromethanopterin (H(4)MPT) to 5,10-methylenetetrahydromethanopterin. In terms of biological role, catalyzes the reversible formation of ribulose-5-phosphate and formaldehyde from 3-hexulose-6-phosphate. The chain is Bifunctional enzyme Fae/Hps from Methanosphaera stadtmanae (strain ATCC 43021 / DSM 3091 / JCM 11832 / MCB-3).